The chain runs to 429 residues: Enolase (429 aa).

Q162 is a binding site for (2R)-2-phosphoglycerate. Catalysis depends on E204, which acts as the Proton donor. Positions 241, 282, and 309 each coordinate Mg(2+). Residues K334, R363, S364, and K385 each contribute to the (2R)-2-phosphoglycerate site. K334 (proton acceptor) is an active-site residue.

This sequence belongs to the enolase family. Requires Mg(2+) as cofactor.

Its subcellular location is the cytoplasm. The protein localises to the secreted. The protein resides in the cell surface. It catalyses the reaction (2R)-2-phosphoglycerate = phosphoenolpyruvate + H2O. Its pathway is carbohydrate degradation; glycolysis; pyruvate from D-glyceraldehyde 3-phosphate: step 4/5. Functionally, catalyzes the reversible conversion of 2-phosphoglycerate (2-PG) into phosphoenolpyruvate (PEP). It is essential for the degradation of carbohydrates via glycolysis. The polypeptide is Enolase (Acidothermus cellulolyticus (strain ATCC 43068 / DSM 8971 / 11B)).